Consider the following 382-residue polypeptide: 8-amino-7-oxononanoate synthase (382 aa).

Substrate contacts are provided by arginine 21 and histidine 131. Positions 178, 206, and 232 each coordinate pyridoxal 5'-phosphate. Position 235 is an N6-(pyridoxal phosphate)lysine (lysine 235). Threonine 349 is a binding site for substrate.

Belongs to the class-II pyridoxal-phosphate-dependent aminotransferase family. BioF subfamily. Homodimer. The cofactor is pyridoxal 5'-phosphate.

The catalysed reaction is 6-carboxyhexanoyl-[ACP] + L-alanine + H(+) = (8S)-8-amino-7-oxononanoate + holo-[ACP] + CO2. Its pathway is cofactor biosynthesis; biotin biosynthesis. Catalyzes the decarboxylative condensation of pimeloyl-[acyl-carrier protein] and L-alanine to produce 8-amino-7-oxononanoate (AON), [acyl-carrier protein], and carbon dioxide. This Serratia marcescens protein is 8-amino-7-oxononanoate synthase.